Here is a 246-residue protein sequence, read N- to C-terminus: tRNA pseudouridine synthase A (246 aa).

The active-site Nucleophile is the Asp52. Tyr111 contributes to the substrate binding site.

The protein belongs to the tRNA pseudouridine synthase TruA family. In terms of assembly, homodimer.

It catalyses the reaction uridine(38/39/40) in tRNA = pseudouridine(38/39/40) in tRNA. In terms of biological role, formation of pseudouridine at positions 38, 39 and 40 in the anticodon stem and loop of transfer RNAs. The chain is tRNA pseudouridine synthase A from Borreliella burgdorferi (strain ZS7) (Borrelia burgdorferi).